Here is a 206-residue protein sequence, read N- to C-terminus: Urease accessory protein UreG (206 aa).

14 to 21 contacts GTP; the sequence is GPVGSGKT.

This sequence belongs to the SIMIBI class G3E GTPase family. UreG subfamily. Homodimer. UreD, UreF and UreG form a complex that acts as a GTP-hydrolysis-dependent molecular chaperone, activating the urease apoprotein by helping to assemble the nickel containing metallocenter of UreC. The UreE protein probably delivers the nickel.

It is found in the cytoplasm. In terms of biological role, facilitates the functional incorporation of the urease nickel metallocenter. This process requires GTP hydrolysis, probably effectuated by UreG. The sequence is that of Urease accessory protein UreG from Aliivibrio fischeri (strain ATCC 700601 / ES114) (Vibrio fischeri).